Reading from the N-terminus, the 458-residue chain is GTPase Der (458 aa).

EngA-type G domains are found at residues 3–167 (PVVV…PETE) and 176–351 (IKLA…AQYT). Residues 9-16 (GRPNVGKS), 56-60 (DTGGF), 119-122 (NKID), 182-189 (GRPNVGKS), 229-233 (DTAGL), and 294-297 (NKWD) contribute to the GTP site. A KH-like domain is found at 352-436 (FNIKTGELNN…PIRLFFREKP (85 aa)).

Belongs to the TRAFAC class TrmE-Era-EngA-EngB-Septin-like GTPase superfamily. EngA (Der) GTPase family. As to quaternary structure, associates with the 50S ribosomal subunit.

Functionally, GTPase that plays an essential role in the late steps of ribosome biogenesis. In Desulfosudis oleivorans (strain DSM 6200 / JCM 39069 / Hxd3) (Desulfococcus oleovorans), this protein is GTPase Der.